Reading from the N-terminus, the 545-residue chain is EH domain-containing protein 1 (545 aa).

EF-hand domains lie at 14–49 (ENQMIYKEWFEFSDSDGDGRITGNDAIKFFTMSNLP) and 50–83 (RPELKQIWAIADSKRQGYLGFKEFIVAMQLVSLA). The 79-residue stretch at 15–93 (NQMIYKEWFE…QTGHEISHEV (79 aa)) folds into the EH domain. Positions 27, 29, 31, 33, 38, 61, 67, and 72 each coordinate Ca(2+). Residues 194 to 429 (FDAKPMVMLL…DLLADLKDIP (236 aa)) form the Dynamin-type G domain. Positions 204-211 (GQYSTGKT) are G1 motif. 204–211 (GQYSTGKT) serves as a coordination point for GTP. The G2 motif stretch occupies residues 230–231 (EP). The G3 motif stretch occupies residues 292 to 295 (DTPG). GTP contacts are provided by residues 309 to 313 (DFTGV) and lysine 359. A G4 motif region spans residues 358-361 (NKAD). Valine 382 is a region of interest (G5 motif). Residue 395–398 (SFSD) participates in GTP binding. Residues 467–490 (KAKAQQKLIDNLEDEFGKVQREHH) adopt a coiled-coil conformation.

The protein belongs to the TRAFAC class dynamin-like GTPase superfamily. Dynamin/Fzo/YdjA family. EHD subfamily. As to quaternary structure, homooligomer, and heterooligomer with EHD2.

Its subcellular location is the endosome membrane. It localises to the cell membrane. It is found in the cytoplasm. The enzyme catalyses GTP + H2O = GDP + phosphate + H(+). In terms of biological role, involved in endocytosis positive regulation. Acts in early endocytic membrane fusion and membrane trafficking of recycling endosomes. Confers salt tolerance. The protein is EH domain-containing protein 1 of Arabidopsis thaliana (Mouse-ear cress).